A 245-amino-acid polypeptide reads, in one-letter code: MKNVGDLMQRLQKMMPAHIKPAFKTGEELLAWQKEQGAIRSAALERENRAMKMQRTFNRSGIRPLHQNCSFENYRVECEGQMNALSKARQYVEEFDGNIASFIFSGKPGTGKNHLAAAICNELLLRGKSVLIITVADIMSAMKDTFRNSGTSEEQLLNDLSNVDLLVIDEIGVQTESKYEKVIINQIVDRRSSSKRPTGMLTNSNMEEMTKLLGERVMDRMRLGNSLWVIFNWDSYRSRVTGKEY.

The protein belongs to the DnaC family. As to quaternary structure, the helix loader is a DnaB(6):DnaC(6) complex with a crack opening large enough to allow ssDNA into the central cavity.

The enzyme catalyses ATP + H2O = ADP + phosphate + H(+). In terms of biological role, required to load the replicative helix DnaB onto single-stranded (ss)DNA, to initiate chromosomal replication. DnaC alters the inter-domain and inter-subunit interactions of DnaB, inducing an open ring conformation that allows ssDNA to access the interior of the DnaB(6):DnaC(6) ring. Has ATPase activity only in the presence of DnaB and ssDNA. ssDNA binds to the central pore in the DnaB(6):DnaC(6) complex, making contacts with both subunits. It forms, in concert with DnaB protein and other prepriming proteins DnaT, N, N', N'' a prepriming protein complex on the specific site of the template DNA recognized by protein N'. This is Replicative helicase loader DnaC (dnaC) from Escherichia coli O157:H7.